The chain runs to 163 residues: Phosphopantetheine adenylyltransferase (163 aa).

Residues S10 and H18 each contribute to the ATP site. S10 lines the substrate pocket. K42, T75, and R89 together coordinate substrate. ATP contacts are provided by residues 90–92 (GIR), E100, and 125–131 (YAHVSSS).

Belongs to the bacterial CoaD family. Homohexamer. It depends on Mg(2+) as a cofactor.

It is found in the cytoplasm. It catalyses the reaction (R)-4'-phosphopantetheine + ATP + H(+) = 3'-dephospho-CoA + diphosphate. The protein operates within cofactor biosynthesis; coenzyme A biosynthesis; CoA from (R)-pantothenate: step 4/5. Reversibly transfers an adenylyl group from ATP to 4'-phosphopantetheine, yielding dephospho-CoA (dPCoA) and pyrophosphate. The chain is Phosphopantetheine adenylyltransferase from Enterococcus faecalis (strain ATCC 700802 / V583).